The primary structure comprises 554 residues: MFS-type transporter tstD (554 aa).

Composition is skewed to polar residues over residues methionine 1–proline 10 and glutamine 27–serine 38. The interval methionine 1–valine 68 is disordered. A glycan (N-linked (GlcNAc...) asparagine) is linked at asparagine 6. Residues serine 39–asparagine 48 are compositionally biased toward basic and acidic residues. The helical transmembrane segment at leucine 76–tyrosine 96 threads the bilayer. N-linked (GlcNAc...) asparagine glycans are attached at residues asparagine 107 and asparagine 114. The next 5 membrane-spanning stretches (helical) occupy residues leucine 115 to serine 135, proline 142 to asparagine 162, leucine 173 to isoleucine 193, isoleucine 202 to leucine 222, and tryptophan 231 to phenylalanine 251. The interval lysine 281–arginine 300 is disordered. The next 3 helical transmembrane spans lie at valine 311–phenylalanine 331, isoleucine 354–threonine 374, and isoleucine 413–threonine 433. The N-linked (GlcNAc...) asparagine glycan is linked to asparagine 437. 3 helical membrane-spanning segments follow: residues isoleucine 442–leucine 462, methionine 473–isoleucine 493, and tryptophan 504–methionine 524.

This sequence belongs to the major facilitator superfamily.

It localises to the membrane. In terms of biological role, MFS-type transporter; part of the gene cluster that mediates the biosynthesis of the antihypercholesterolemic agents phomoidrides which are dimeric anhydrides. This is MFS-type transporter tstD from Talaromyces stipitatus (strain ATCC 10500 / CBS 375.48 / QM 6759 / NRRL 1006) (Penicillium stipitatum).